A 22-amino-acid chain; its full sequence is Major outer membrane protein (22 aa).

The protein belongs to the Gram-negative porin family. In terms of assembly, disulfide bond interactions within and between MOMP molecules and other components form high molecular-weight oligomers.

It localises to the cell outer membrane. Functionally, structural rigidity of the outer membrane of elementary bodies and porin forming, permitting diffusion of solutes through the intracellular reticulate body membrane. The sequence is that of Major outer membrane protein (ompH) from Avibacterium gallinarum (Pasteurella gallinarum).